We begin with the raw amino-acid sequence, 141 residues long: Early nodulin-like protein 19 (141 aa).

The signal sequence occupies residues 1-26; the sequence is MGRSMVLISAVVLAFLVAAPIPEVTA. Residues 27 to 127 form the Phytocyanin domain; the sequence is KKYLVGDKKF…GMKLDVLVET (101 aa). Residues Asn-42 and Asn-88 are each glycosylated (N-linked (GlcNAc...) asparagine). Cys-80 and Cys-115 are oxidised to a cystine.

The protein belongs to the early nodulin-like (ENODL) family.

May act as a carbohydrate transporter. In Arabidopsis thaliana (Mouse-ear cress), this protein is Early nodulin-like protein 19.